We begin with the raw amino-acid sequence, 1268 residues long: ATP-dependent helicase/nuclease subunit A (1268 aa).

The UvrD-like helicase ATP-binding domain maps to 3 to 476 (TKWTEEQELA…IMLYKNFRSR (474 aa)). Residue 24-31 (AAAGSGKT) participates in ATP binding. The 297-residue stretch at 528–824 (IENLKVAGDI…RIMSIHKSKG (297 aa)) folds into the UvrD-like helicase C-terminal domain.

The protein belongs to the helicase family. AddA subfamily. Heterodimer of AddA and AddB/RexB. Mg(2+) is required as a cofactor.

The enzyme catalyses Couples ATP hydrolysis with the unwinding of duplex DNA by translocating in the 3'-5' direction.. It carries out the reaction ATP + H2O = ADP + phosphate + H(+). Its function is as follows. The heterodimer acts as both an ATP-dependent DNA helicase and an ATP-dependent, dual-direction single-stranded exonuclease. Recognizes the chi site generating a DNA molecule suitable for the initiation of homologous recombination. The AddA nuclease domain is required for chi fragment generation; this subunit has the helicase and 3' -&gt; 5' nuclease activities. This chain is ATP-dependent helicase/nuclease subunit A, found in Clostridium perfringens (strain 13 / Type A).